Reading from the N-terminus, the 192-residue chain is ADP-ribosylation factor-like protein 14 (192 aa).

Residue Gly-2 is the site of N-myristoyl glycine attachment. GTP is bound by residues 20 to 27, 64 to 68, and 124 to 127; these read GLDSAGKS, DVGGQ, and NKQD.

Belongs to the small GTPase superfamily. Arf family. As to quaternary structure, interacts with ARL14EP.

The protein localises to the cytoplasmic vesicle. GTPase that recruits MYO1E to MHC class II-containing vesicles via the effector protein ARL14EP and hence controls the movement of these vesicles along the actin cytoskeleton in dendritic cells. In Mus musculus (Mouse), this protein is ADP-ribosylation factor-like protein 14 (Arl14).